A 156-amino-acid chain; its full sequence is 6,7-dimethyl-8-ribityllumazine synthase (156 aa).

Residues Phe-25, Ala-59–Glu-61, and Ala-83–Ile-85 each bind 5-amino-6-(D-ribitylamino)uracil. Residue Ala-88 to Thr-89 coordinates (2S)-2-hydroxy-3-oxobutyl phosphate. The Proton donor role is filled by His-91. Phe-116 lines the 5-amino-6-(D-ribitylamino)uracil pocket. (2S)-2-hydroxy-3-oxobutyl phosphate is bound at residue Arg-130.

The protein belongs to the DMRL synthase family.

It catalyses the reaction (2S)-2-hydroxy-3-oxobutyl phosphate + 5-amino-6-(D-ribitylamino)uracil = 6,7-dimethyl-8-(1-D-ribityl)lumazine + phosphate + 2 H2O + H(+). Its pathway is cofactor biosynthesis; riboflavin biosynthesis; riboflavin from 2-hydroxy-3-oxobutyl phosphate and 5-amino-6-(D-ribitylamino)uracil: step 1/2. Functionally, catalyzes the formation of 6,7-dimethyl-8-ribityllumazine by condensation of 5-amino-6-(D-ribitylamino)uracil with 3,4-dihydroxy-2-butanone 4-phosphate. This is the penultimate step in the biosynthesis of riboflavin. The protein is 6,7-dimethyl-8-ribityllumazine synthase of Nitratidesulfovibrio vulgaris (strain DSM 19637 / Miyazaki F) (Desulfovibrio vulgaris).